The following is a 158-amino-acid chain: Ribosomal RNA large subunit methyltransferase H (158 aa).

S-adenosyl-L-methionine contacts are provided by residues leucine 76, glycine 107, and 126 to 131 (LSGLTM).

It belongs to the RNA methyltransferase RlmH family. As to quaternary structure, homodimer.

The protein resides in the cytoplasm. It carries out the reaction pseudouridine(1915) in 23S rRNA + S-adenosyl-L-methionine = N(3)-methylpseudouridine(1915) in 23S rRNA + S-adenosyl-L-homocysteine + H(+). Its function is as follows. Specifically methylates the pseudouridine at position 1915 (m3Psi1915) in 23S rRNA. In Teredinibacter turnerae (strain ATCC 39867 / T7901), this protein is Ribosomal RNA large subunit methyltransferase H.